The primary structure comprises 201 residues: Large ribosomal subunit protein uL18 (201 aa).

Belongs to the universal ribosomal protein uL18 family. In terms of assembly, part of the 50S ribosomal subunit. Contacts the 5S and 23S rRNAs.

This is one of the proteins that bind and probably mediate the attachment of the 5S RNA into the large ribosomal subunit, where it forms part of the central protuberance. This chain is Large ribosomal subunit protein uL18, found in Thermococcus onnurineus (strain NA1).